The sequence spans 458 residues: Oxysterol-binding protein-related protein 3B (458 aa).

Disordered stretches follow at residues 47-66 (VINP…RGRW), 370-401 (DMSK…AFTP), and 431-458 (RAAA…DLST). Basic and acidic residues predominate over residues 375–396 (GYEKSSMEERQRAEKRTREEKG). The span at 443-458 (PKSIQFNPWQFQDLST) shows a compositional bias: polar residues.

It belongs to the OSBP family. As to expression, expressed in roots, leaves, stems and flowers.

Its function is as follows. May be involved in the transport of sterols. In Arabidopsis thaliana (Mouse-ear cress), this protein is Oxysterol-binding protein-related protein 3B (ORP3B).